Here is a 343-residue protein sequence, read N- to C-terminus: Anthranilate phosphoribosyltransferase (343 aa).

5-phospho-alpha-D-ribose 1-diphosphate contacts are provided by residues glycine 84, 87 to 88, threonine 92, 94 to 97, 112 to 120, and serine 124; these read GD, NIST, and KHGNRGVSS. Glycine 84 contacts anthranilate. Serine 96 contributes to the Mg(2+) binding site. Residue asparagine 115 coordinates anthranilate. Residue arginine 170 coordinates anthranilate. The Mg(2+) site is built by aspartate 229 and glutamate 230.

It belongs to the anthranilate phosphoribosyltransferase family. In terms of assembly, homodimer. Mg(2+) serves as cofactor.

It catalyses the reaction N-(5-phospho-beta-D-ribosyl)anthranilate + diphosphate = 5-phospho-alpha-D-ribose 1-diphosphate + anthranilate. Its pathway is amino-acid biosynthesis; L-tryptophan biosynthesis; L-tryptophan from chorismate: step 2/5. In terms of biological role, catalyzes the transfer of the phosphoribosyl group of 5-phosphorylribose-1-pyrophosphate (PRPP) to anthranilate to yield N-(5'-phosphoribosyl)-anthranilate (PRA). The sequence is that of Anthranilate phosphoribosyltransferase from Burkholderia orbicola (strain AU 1054).